The chain runs to 595 residues: Proline--tRNA ligase (595 aa).

A disordered region spans residues 1–22 (MKMSTMFGATLHTAPGRSESEG).

Belongs to the class-II aminoacyl-tRNA synthetase family. ProS type 1 subfamily. In terms of assembly, homodimer.

Its subcellular location is the cytoplasm. It carries out the reaction tRNA(Pro) + L-proline + ATP = L-prolyl-tRNA(Pro) + AMP + diphosphate. Catalyzes the attachment of proline to tRNA(Pro) in a two-step reaction: proline is first activated by ATP to form Pro-AMP and then transferred to the acceptor end of tRNA(Pro). As ProRS can inadvertently accommodate and process non-cognate amino acids such as alanine and cysteine, to avoid such errors it has two additional distinct editing activities against alanine. One activity is designated as 'pretransfer' editing and involves the tRNA(Pro)-independent hydrolysis of activated Ala-AMP. The other activity is designated 'posttransfer' editing and involves deacylation of mischarged Ala-tRNA(Pro). The misacylated Cys-tRNA(Pro) is not edited by ProRS. The polypeptide is Proline--tRNA ligase (Salinispora tropica (strain ATCC BAA-916 / DSM 44818 / JCM 13857 / NBRC 105044 / CNB-440)).